A 257-amino-acid chain; its full sequence is 5-keto-4-deoxy-D-glucarate aldolase (257 aa).

Histidine 51 (proton acceptor) is an active-site residue. A substrate-binding site is contributed by glutamine 152. Residue glutamate 154 coordinates Mg(2+). Positions 179 and 180 each coordinate substrate. Position 180 (aspartate 180) interacts with Mg(2+).

This sequence belongs to the HpcH/HpaI aldolase family. KDGluc aldolase subfamily. In terms of assembly, homohexamer; trimer of dimers. It depends on Mg(2+) as a cofactor.

The enzyme catalyses 5-dehydro-4-deoxy-D-glucarate = 2-hydroxy-3-oxopropanoate + pyruvate. It catalyses the reaction 2-dehydro-3-deoxy-D-glucarate = 2-hydroxy-3-oxopropanoate + pyruvate. Its pathway is carbohydrate acid metabolism; galactarate degradation; D-glycerate from galactarate: step 2/3. In terms of biological role, catalyzes the reversible retro-aldol cleavage of both 5-keto-4-deoxy-D-glucarate and 2-keto-3-deoxy-D-glucarate to pyruvate and tartronic semialdehyde. This is 5-keto-4-deoxy-D-glucarate aldolase from Shigella boydii serotype 18 (strain CDC 3083-94 / BS512).